We begin with the raw amino-acid sequence, 100 residues long: uncharacterized protein (100 aa).

The protein resides in the virion. This is an uncharacterized protein from Acanthamoeba polyphaga mimivirus (APMV).